The chain runs to 273 residues: MAKHLYKTPIPSTRKGTVDRQVKSNPRNKLIHGRHRCGKGRNARGIITARHRGGGHKRLYRKIDFRRNQKDISGRIVTIEYDPNRNAYICLIHYGDGEKRYILHPRGAIIGDTIVSGTKVPISMGNALPLTDMPLGTAIHNIEITRGRGGQLARAAGAVAKLIAKEGKLATLRLPSGEVRLVSQNCLATVGQVGNVGVNQKSLGRAGSKCWLGKRPVVRGVVMNPVDHPHGGGEGKAPIGRKKPTTPWGYPALGRRTRKRKKYSDSFILRRRK.

2 disordered regions span residues 1 to 22 (MAKHLYKTPIPSTRKGTVDRQV) and 225 to 273 (PVDH…RRRK).

Belongs to the universal ribosomal protein uL2 family. As to quaternary structure, part of the 50S ribosomal subunit.

The protein localises to the plastid. The protein resides in the chloroplast. This chain is Large ribosomal subunit protein uL2cz/uL2cy (rpl2-A), found in Saccharum hybrid (Sugarcane).